Here is an 88-residue protein sequence, read N- to C-terminus: Large ribosomal subunit protein eL37 (88 aa).

Residues cysteine 19, cysteine 22, cysteine 34, and cysteine 37 each coordinate Zn(2+). The C4-type zinc-finger motif lies at 19–37 (CNRCGKRSFHVQKKTCASC).

The protein belongs to the eukaryotic ribosomal protein eL37 family. Requires Zn(2+) as cofactor.

In terms of biological role, binds to the 23S rRNA. The protein is Large ribosomal subunit protein eL37 (RPL37) of Debaryomyces hansenii (strain ATCC 36239 / CBS 767 / BCRC 21394 / JCM 1990 / NBRC 0083 / IGC 2968) (Yeast).